Consider the following 416-residue polypeptide: Fusaric acid cluster transcription factor FUB10 (416 aa).

Positions 16–47 (CDRCRAQKLRCHRDSGHSTDACLRCLKSGIEC) form a DNA-binding region, zn(2)-C6 fungal-type. The disordered stretch occupies residues 50–92 (SKARPTGRPPSRQVQPTVSVEQGDTSSSSHTTDSSPSAGGTDI). Polar residues predominate over residues 61 to 73 (RQVQPTVSVEQGD). Residues 74–86 (TSSSSHTTDSSPS) show a composition bias toward low complexity.

It localises to the nucleus. Functionally, transcription factor that regulates the expression of the gene cluster that mediates the biosynthesis of fusaric acid, a mycotoxin with low to moderate toxicity to animals and humans, but with high phytotoxic properties. The polypeptide is Fusaric acid cluster transcription factor FUB10 (Fusarium oxysporum f. sp. lycopersici (strain 4287 / CBS 123668 / FGSC 9935 / NRRL 34936) (Fusarium vascular wilt of tomato)).